Consider the following 2497-residue polypeptide: Polyprotein P1234 (2497 aa).

Residues 28-259 (EAKQVTDNDH…EKRDLLRSWH (232 aa)) enclose the Alphavirus-like MT domain. The interval 244–263 (GSTIYHEKRDLLRSWHLPSV) is nsP1 membrane-binding. Cysteine 419 is lipidated: S-palmitoyl cysteine; by host. In terms of domain architecture, (+)RNA virus helicase ATP-binding spans 690–841 (ELVDPPFHEF…HEICTQVFHK (152 aa)). Position 721–728 (721–728 (GVPGSGKS)) interacts with a ribonucleoside 5'-triphosphate. The 149-residue stretch at 842–990 (SISRRCTKSV…MEEWQAEHDA (149 aa)) folds into the (+)RNA virus helicase C-terminal domain. In terms of domain architecture, Peptidase C9 spans 1003–1322 (DVFQNKANVC…STLTNIYTGS (320 aa)). Residues 1004 to 1023 (VFQNKANVCWAKALVPVLKT) are nucleolus localization signal. The active-site For cysteine protease nsP2 activity is cysteine 1012. Positions 1056 to 1065 (VRFFGLDLDS) match the Nuclear export signal motif. The For cysteine protease nsP2 activity role is filled by histidine 1081. A Nuclear localization signal motif is present at residues 1179-1183 (SGKTV). Residues 1328 to 1489 (GCAPSYHVVR…TLKEVVARRE (162 aa)) enclose the Macro domain. Aspartate 1339, asparagine 1353, glycine 1361, glycine 1441, isoleucine 1442, and phenylalanine 1443 together coordinate ADP-D-ribose. Residues cysteine 1596, cysteine 1598, cysteine 1621, and cysteine 1639 each contribute to the Zn(2+) site. 2 disordered regions span residues 1774–1806 (IPRPRVQSTSTDVDSISALESCDSTSDARSVDS) and 1827–1865 (APRTKFRTPPVPKPRARRPFHPLSSRSSSRSSLASNPPG). The tract at residues 1856-1877 (RSSLASNPPGVNRVITREEFEA) is binding to host FXR family members. Residues 2254–2369 (DWVLETDIAS…KGVKSDKLMA (116 aa)) form the RdRp catalytic domain.

Interacts with non-structural protein 3. Interacts with RNA-directed RNA polymerase nsP4. Interacts with protease nsP2. interacts with itself. As to quaternary structure, interacts with mRNA-capping enzyme nsP1. Interacts with host DDX1. Interacts with host DDX3. Interacts (via C-terminus) with host FXR1; this interaction inhibits the formation of host stress granules on viral mRNAs and the nsp3-FXR1 complexes bind viral RNAs and probably orchestrate the assembly of viral replication complexes. Interacts (via C-terminus) with host FXR2; this interaction inhibits the formation of host stress granules on viral mRNAs and the nsp3-FXR2 complexes bind viral RNAs and probably orchestrate the assembly of viral replication complexes. Interacts (via C-terminus) with host FMR1; this interaction inhibits the formation of host stress granules on viral mRNAs and the nsp3-FMR1 complexes bind viral RNAs and probably orchestrate the assembly of viral replication complexes. In terms of assembly, interacts with mRNA-capping enzyme nsP1. Interacts with protease nsP2. interacts with itself. Interacts with RNA-directed RNA polymerase nsP4. Interacts with mRNA-capping enzyme nsP1. Interacts with KPNA1/karyopherin-alpha1; this interaction probably allows the active transport of protease nsP2 into the host nucleus. It depends on Mg(2+) as a cofactor. The cofactor is Mn(2+). Specific enzymatic cleavages in vivo yield mature proteins. The processing of the polyprotein is temporally regulated. In early stages (1.7 hpi), P1234 is first cleaved in trans through its nsP2 protease activity, releasing P123' and nsP4, which associate to form the early replication complex. At the same time, P1234 is also cut at the nsP1/nsP2 site early in infection but with lower efficiency. After replication of the viral minus-strand RNAs (4 hpi), the polyproteins are cut at the nsP1/nsP2 and nsP2/nsP3 sites very efficiently, preventing accumulation of P123' and P1234 and allowing the formation of the late replication complex. NsP3'/nsP4 site is not cleaved anymore and P34 is produced rather than nsP4. Post-translationally, specific enzymatic cleavages in vivo yield mature proteins. The processing of the polyprotein is temporally regulated. In early stages (1.7 hpi), P123 is cleaved at the nsP1/nsP2 site with low efficiency. After replication of the viral minus-strand RNAs (4 hpi), the polyproteins are cut at the nsP1/nsP2 and nsP2/nsP3 sites very efficiently, preventing accumulation of P123 and allowing the formation of the late replication complex. In terms of processing, specific enzymatic cleavages in vivo yield mature proteins. The processing of the polyprotein is temporally regulated. In early stages (1.7 hpi), P123' is cleaved at the nsP1/nsP2 site with low efficiency. After replication of the viral minus-strand RNAs (4 hpi), the polyproteins are cut at the nsP1/nsP2 and nsP2/nsP3 sites very efficiently, preventing accumulation of P123' and allowing the formation of the late replication complex. Palmitoylated by host palmitoyltransferases ZDHHC2 and ZDHHC19. Post-translationally, phosphorylated by host on serines and threonines. In terms of processing, ubiquitinated; targets the protein for rapid degradation via the ubiquitin system. Nsp4 is present in extremely low quantities due to low frequency of translation through the amber stop-codon and the degradation by the ubiquitin pathway.

It localises to the host cytoplasmic vesicle membrane. It is found in the host cell membrane. The protein resides in the host cell projection. The protein localises to the host filopodium. Its subcellular location is the host nucleus. It localises to the host cytoplasm. It carries out the reaction GTP + S-adenosyl-L-methionine = N(7)-methyl-GTP + S-adenosyl-L-homocysteine. The enzyme catalyses N(7)-methyl-GTP + L-histidyl-[protein] = N(tele)-(N(7)-methylguanosine 5'-phospho)-L-histidyl-[protein] + diphosphate. The catalysed reaction is N(tele)-(N(7)-methylguanosine 5'-phospho)-L-histidyl-[protein] + a 5'-end diphospho-(purine-ribonucleoside) in mRNA + H(+) = a 5'-end (N(7)-methyl 5'-triphosphoguanosine)-(purine-ribonucleoside) in mRNA + L-histidyl-[protein]. It catalyses the reaction a 5'-end triphospho-ribonucleoside in mRNA + H2O = a 5'-end diphospho-ribonucleoside in mRNA + phosphate + H(+). It carries out the reaction a ribonucleoside 5'-triphosphate + H2O = a ribonucleoside 5'-diphosphate + phosphate + H(+). The enzyme catalyses ATP + H2O = ADP + phosphate + H(+). The catalysed reaction is RNA(n) + a ribonucleoside 5'-triphosphate = RNA(n+1) + diphosphate. It catalyses the reaction 4-O-(ADP-D-ribosyl)-L-aspartyl-[protein] + H2O = L-aspartyl-[protein] + ADP-D-ribose + H(+). It carries out the reaction 5-O-(ADP-D-ribosyl)-L-glutamyl-[protein] + H2O = L-glutamyl-[protein] + ADP-D-ribose + H(+). The enzyme catalyses RNA(n) + ATP = RNA(n)-3'-adenine ribonucleotide + diphosphate. The catalysed reaction is ADP-alpha-D-ribose 1''-phosphate + H2O = ADP-D-ribose + phosphate. Inhibited by sinefungin. Inactive precursor of the viral replicase, which is activated by cleavages carried out by the viral protease nsP2. Its function is as follows. The early replication complex formed by the polyprotein P123 and nsP4 synthesizes the minus-strand RNAs (antigenome). Polyprotein P123 is a short-lived polyprotein that accumulates during early stage of infection. As soon P123 is cleaved into mature proteins, the plus-strand RNAs synthesis begins. Functionally, the early replication complex formed by the polyprotein P123' and nsP4 synthesizes minus-strand RNAs (antigenome). Polyprotein P123' is a short-lived polyprotein that accumulates during early stage of infection. As soon P123' is cleaved into mature proteins, the plus-strand RNAs synthesis begins. In terms of biological role, cytoplasmic capping enzyme that catalyzes two virus-specific reactions: methyltransferase and nsP1 guanylyltransferase. mRNA-capping is necessary since all viral RNAs are synthesized in the cytoplasm, and host capping enzymes are restricted to the nucleus. The enzymatic reaction involves a covalent link between 7-methyl-GMP and nsP1, whereas eukaryotic capping enzymes form a covalent complex only with GMP. NsP1 capping consists in the following reactions: GTP is first methylated into 7-methyl-GMP and then is covalently linked to nsP1 to form the m7GMp-nsP1 complex from which 7-methyl-GMP complex is transferred to the mRNA to create the cap structure. NsP1 is also needed for the initiation of the minus-strand RNAs synthesis. Probably serves as a membrane anchor for the replication complex composed of nsP1-nsP4. Nsp1 is needed for the initiation of the minus-strand RNAs synthesis. Palmitoylated nsP1 is remodeling host cell cytoskeleton, and induces filopodium-like structure formation at the surface of the host cell. Multifunctional protein whose N-terminus is part of the RNA polymerase complex and displays NTPase, RNA triphosphatase and helicase activities. NTPase and RNA triphosphatase are involved in viral RNA capping and helicase keeps a check on the dsRNA replication intermediates. The C-terminus harbors a protease that specifically cleaves the polyproteins and releases the mature proteins. Required for the shutoff of minus-strand RNAs synthesis. Inhibits host translation to ensure maximal viral gene expression and evade host immune response. Its function is as follows. Seems to be essential for minus-strand RNAs and subgenomic 26S mRNAs synthesis. Displays mono-ADP-ribosylhydrolase activity. ADP-ribosylation is a post-translational modification that controls various processes of the host cell and the virus probably needs to revert it for optimal viral replication. Binds proteins of FXR family and sequesters them into the viral RNA replication complexes thereby inhibiting the formation of host stress granules on viral mRNAs. The nsp3-FXR complexes bind viral RNAs and probably orchestrate the assembly of viral replication complexes, thanks to the ability of FXR family members to self-assemble and bind DNA. Functionally, seems to be essential for minus-strand RNAs and subgenomic 26S mRNAs synthesis. Displays mono-ADP-ribosylhydrolase activity. ADP-ribosylation is a post-translational modification that controls various processes of the host cell and the virus probably needs to revert it for optimal viral replication. Binds proteins of FXR family and sequesters them into the viral RNA replication complexes thereby inhibiting the formation of host stress granules on viral mRNAs. The nsp3'-FXR complexes bind viral RNAs and probably orchestrate the assembly of viral replication complexes, thanks to the ability of FXR family members to self-assemble and bind DNA. In terms of biological role, RNA dependent RNA polymerase. Replicates genomic and antigenomic RNA by recognizing replications specific signals. The early replication complex formed by the polyprotein P123 and nsP4 synthesizes minus-strand RNAs. The late replication complex composed of fully processed nsP1-nsP4 is responsible for the production of genomic and subgenomic plus-strand RNAs. In Venezuelan equine encephalitis virus (VEEV), this protein is Polyprotein P1234.